Here is a 470-residue protein sequence, read N- to C-terminus: Sorting nexin-17 (470 aa).

Residues methionine 1 to threonine 109 form the PX domain. Residues arginine 36, serine 38, lysine 62, and arginine 75 each contribute to the a 1,2-diacyl-sn-glycero-3-phospho-(1D-myo-inositol-3-phosphate) site. Positions glutamate 115–tryptophan 206 constitute a Ras-associating domain. Residues glutamate 115 to leucine 432 form an FERM-like region. Residues glycine 270–leucine 432 form a PTB-like F3 module region. The disordered stretch occupies residues glycine 401 to serine 425. A phosphoserine mark is found at serine 407, serine 409, serine 415, serine 421, serine 437, and serine 440.

Belongs to the sorting nexin family. As to quaternary structure, monomer. Interacts with APP (via cytoplasmic YXNPXY motif). Interacts with KIF1B. Interacts with the C-termini of P-selectin, PTC, LDLR, VLDLR, LRP1 and LRP8. Interacts with KRIT1 (via N-terminus). Interacts with HRAS. Interacts with ITGB1 and ITGB5 (via NPxY motif). Interacts with CCDC22 and CCDC93; the interaction associates SNX17 with the CCC complex. Interacts (via C-terminus) with VPS26C and VPS35L; the interactions are direct and associate SNX17 with the retriever complex.

It localises to the cytoplasm. The protein resides in the early endosome. Its subcellular location is the cytoplasmic vesicle membrane. Functionally, critical regulator of endosomal recycling of numerous surface proteins, including integrins, signaling receptor and channels. Binds to NPxY sequences in the cytoplasmic tails of target cargos. Associates with retriever and CCC complexes to prevent lysosomal degradation and promote cell surface recycling of numerous cargos such as integrins ITGB1, ITGB5 and their associated alpha subunits. Also required for maintenance of normal cell surface levels of APP and LRP1. Interacts with membranes containing phosphatidylinositol 3-phosphate (PtdIns(3P)). The sequence is that of Sorting nexin-17 (Snx17) from Rattus norvegicus (Rat).